A 754-amino-acid polypeptide reads, in one-letter code: 17S U2 SnRNP complex component HTATSF1 (754 aa).

Disordered stretches follow at residues 1-53 and 81-122; these read MSGT…YEWD and GASS…KAES. Position 2 is an N-acetylserine (serine 2). Over residues 90–122 the composition is skewed to basic and acidic residues; it reads EDVHARTAEEPPQEKAPEPTDPRKKGEKRKAES. RRM domains are found at residues 133 to 218 and 264 to 349; these read TNVY…VAKF and RVVI…AWDG. The U2AF homology motif (UHM) stretch occupies residues 259 to 353; it reads RMRHERVVII…AQAWDGTTDY (95 aa). Position 297 is an N6-acetyllysine (lysine 297). The interval 380 to 415 is disordered; that stretch reads RGLRRSDSVSASERAGPSRARHFSEHPSTSKMNAQE. Residues 381 to 754 are mediates interaction with the P-TEFb complex; the sequence is GLRRSDSVSA…ILSSDDDDDI (374 aa). A phosphoserine mark is found at serine 387, serine 403, serine 407, and serine 409. Over residues 405 to 415 the composition is skewed to polar residues; sequence HPSTSKMNAQE. Residues lysine 429 and lysine 430 each participate in a glycyl lysine isopeptide (Lys-Gly) (interchain with G-Cter in SUMO2) cross-link. The segment at 433–754 is disordered; the sequence is KTEDGGEFEE…ILSSDDDDDI (322 aa). Serine 445, serine 452, and serine 453 each carry phosphoserine. Basic and acidic residues predominate over residues 462-476; the sequence is CPGKESEEGCPKRGF. A phosphoserine mark is found at serine 481, serine 485, serine 494, serine 498, serine 521, and serine 529. Residues 508-538 show a composition bias toward basic and acidic residues; the sequence is LRNDCEENGFAKESEDDPNKESEEEVGPTKE. The segment covering 539–552 has biased composition (acidic residues); that stretch reads SEEDDSEKESDEDC. The span at 553–563 shows a compositional bias: basic and acidic residues; the sequence is SEKQSEDGSER. Phosphoserine occurs at positions 557, 561, and 579. The segment covering 564-579 has biased composition (acidic residues); sequence EFEENGLEKDLDEEGS. The segment covering 580–590 has biased composition (basic and acidic residues); the sequence is EKELHENVLDK. Residues 591–606 are compositionally biased toward acidic residues; the sequence is ELEENDSENSEFEDDG. A phosphoserine mark is found at serine 597, serine 600, serine 607, serine 616, and serine 624. Composition is skewed to acidic residues over residues 613–633 and 640–651; these read EEGSEREFDEDSDEKEEEEDT and DESNEKEDEEYA. A Phosphothreonine modification is found at threonine 633. Serine 642 carries the phosphoserine modification. Residues 652-674 are compositionally biased toward basic and acidic residues; that stretch reads DEKGLEAADKKEEEGDADEKLFE. Over residues 675–713 the composition is skewed to acidic residues; that stretch reads ESDDKEDEDADGKEVEDADEKLFEDDDSNEKLFDEEEDS. Phosphoserine occurs at positions 676, 702, 713, 721, and 748. Residues 714 to 725 show a composition bias toward basic and acidic residues; it reads NEKLFDDSDERG.

Belongs to the HTATSF1 family. As to quaternary structure, component of the 17S U2 SnRNP complex, a ribonucleoprotein complex that contains small nuclear RNA (snRNA) U2 and a number of specific proteins. Within the 17S U2 SnRNP complex, interacts (via UHM region) directly with SF3B1. Component of a complex which is at least composed of HTATSF1/Tat-SF1, the P-TEFb complex components CDK9 and CCNT1, RNA polymerase II, SUPT5H, and NCL/nucleolin. Interacts with GTF2F2/RAP30 and POLR2A. Interacts with TCERG1/CA150. Interacts with (poly-ADP-ribosylated) RPA1; promoting HTATSF1 recruitment to DNA damage sites. Interacts (when phosphorylated) with TOPBP1; promoting recruitment of TOPBP1 to DNA damage sites during S-phase. Post-translationally, phosphorylation at Ser-748 by CK2 during S-phase in response to DNA damage promotes interaction with TOPBP1 and double-strand break (DSB) repair via homologous recombination.

It is found in the nucleus. The protein localises to the chromosome. In terms of biological role, component of the 17S U2 SnRNP complex of the spliceosome, a large ribonucleoprotein complex that removes introns from transcribed pre-mRNAs. The 17S U2 SnRNP complex (1) directly participates in early spliceosome assembly and (2) mediates recognition of the intron branch site during pre-mRNA splicing by promoting the selection of the pre-mRNA branch-site adenosine, the nucleophile for the first step of splicing. Within the 17S U2 SnRNP complex, HTATSF1 is required to stabilize the branchpoint-interacting stem loop. HTATSF1 is displaced from the 17S U2 SnRNP complex before the stable addition of the 17S U2 SnRNP complex to the spliceosome, destabilizing the branchpoint-interacting stem loop and allowing to probe intron branch site sequences. Also acts as a regulator of transcriptional elongation, possibly by mediating the reciprocal stimulatory effect of splicing on transcriptional elongation. Involved in double-strand break (DSB) repair via homologous recombination in S-phase by promoting the recruitment of TOPBP1 to DNA damage sites. Mechanistically, HTATSF1 is (1) recruited to DNA damage sites in S-phase via interaction with poly-ADP-ribosylated RPA1 and (2) phosphorylated by CK2, promoting recruitment of TOPBP1, thereby facilitating RAD51 nucleofilaments formation and RPA displacement, followed by homologous recombination. This chain is 17S U2 SnRNP complex component HTATSF1 (HTATSF1), found in Pongo abelii (Sumatran orangutan).